The chain runs to 305 residues: Translation initiation factor eIF2B subunit alpha (305 aa).

The residue at position 2 (serine 2) is an N-acetylserine. Threonine 291 carries the phosphothreonine modification.

The protein belongs to the eIF-2B alpha/beta/delta subunits family. As to quaternary structure, component of the translation initiation factor 2B (eIF2B) complex which is a heterodecamer of two sets of five different subunits: alpha, beta, gamma, delta and epsilon. Subunits alpha, beta and delta comprise a regulatory subcomplex and subunits epsilon and gamma comprise a catalytic subcomplex. Within the complex, the hexameric regulatory complex resides at the center, with the two heterodimeric catalytic subcomplexes bound on opposite sides.

The protein resides in the cytoplasm. It is found in the cytosol. Functionally, acts as a component of the translation initiation factor 2B (eIF2B) complex, which catalyzes the exchange of GDP for GTP on the eukaryotic initiation factor 2 (eIF2) complex gamma subunit. Its guanine nucleotide exchange factor activity is repressed when bound to eIF2 complex phosphorylated on the alpha subunit, thereby limiting the amount of methionyl-initiator methionine tRNA available to the ribosome and consequently global translation is repressed. It activates the translation of GCN4 in response to low amino acid, carbon, or purine availability, by suppressing the inhibitory effects of multiple uORFs present in the leader of GCN4 mRNA. It may promote either repression or activation of GCN4 expression depending on amino acid availability. Modulation of GCN3 regulatory function in response to amino acid availability occurs post-translationally. The sequence is that of Translation initiation factor eIF2B subunit alpha from Saccharomyces cerevisiae (strain ATCC 204508 / S288c) (Baker's yeast).